We begin with the raw amino-acid sequence, 175 residues long: Bifunctional protein PyrR (175 aa).

The PRPP-binding signature appears at 97-109; it reads IVLIDDVLFTGRT.

It belongs to the purine/pyrimidine phosphoribosyltransferase family. PyrR subfamily. As to quaternary structure, homodimer and homohexamer; in equilibrium.

The catalysed reaction is UMP + diphosphate = 5-phospho-alpha-D-ribose 1-diphosphate + uracil. Functionally, regulates transcriptional attenuation of the pyrimidine nucleotide (pyr) operon by binding in a uridine-dependent manner to specific sites on pyr mRNA. This disrupts an antiterminator hairpin in the RNA and favors formation of a downstream transcription terminator, leading to a reduced expression of downstream genes. Also displays a weak uracil phosphoribosyltransferase activity which is not physiologically significant. The polypeptide is Bifunctional protein PyrR (Leuconostoc citreum (strain KM20)).